The following is a 69-amino-acid chain: U2-agatoxin-Ao1o (69 aa).

An N-terminal signal peptide occupies residues 1-20; the sequence is MKAIISLLLISAMVFSMFEA. The propeptide occupies 21-34; that stretch reads VPVRRRFTAFEGER. 3 disulfides stabilise this stretch: Cys36–Cys52, Cys43–Cys57, and Cys51–Cys67. Leu68 is subject to Leucine amide.

This sequence belongs to the neurotoxin 01 (U2-agtx) family. Expressed by the venom gland.

Its subcellular location is the secreted. In terms of biological role, insect active toxin causing rapid but reversible paralysis in crickets. No activity shown in mammals. Does not show effect on mammalian voltage-gated calcium channels. The protein is U2-agatoxin-Ao1o of Agelena orientalis (Funnel-web spider).